The sequence spans 465 residues: MQKITHWQEYKIEAKSLILLSLPILLAQIAQNSMGLVDTIMAGRVSAADMAAISVGASIWMPLVLFGQGLLLALPPTISYLNGSAQRHRIAHQVRQGIWIILFSIVPLALLIYHSDTVINRMGMEEHLAQITIKYLHAMLFGLPAYLLLVNFRCLNDGLAKTKPAMIITLIGLLLNIPLNYIFIYGKLGVPAFGAVGCGIATTIVNWIMCILMISYTKSARNQRDLKVFENIIELPNPATLKKLFKLGLPIAIAICSEVALFALTSLLLSPLGTNAVASHQIALNTSSFIFMLPMSLGMATTILVGQSLGERSPLKAKDISYVALFIGLATATLTAFLTVVLRYQIAGIFVKDTEVISLAASLLLLNALYQFSDAVQVVVGGALRGYKDTKAILYITLFCYWVLGMPIGYILSRTDLITAHMGPTGFWIAFVVSLTVAAVLLFYRMYKIQKQSDEQLLTKLEKLK.

A run of 10 helical transmembrane segments spans residues 50 to 72 (MAAI…GLLL), 92 to 114 (HQVR…LIYH), 127 to 149 (HLAQ…YLLL), 164 to 186 (PAMI…FIYG), 193 to 215 (FGAV…LMIS), 248 to 270 (GLPI…LLLS), 283 to 305 (ALNT…TILV), 320 to 342 (ISYV…TVVL), 393 to 412 (ILYI…GYIL), and 422 to 444 (MGPT…LLFY).

The protein belongs to the multi antimicrobial extrusion (MATE) (TC 2.A.66.1) family.

It localises to the cell inner membrane. Multidrug efflux pump. In Mannheimia succiniciproducens (strain KCTC 0769BP / MBEL55E), this protein is Probable multidrug resistance protein NorM (norM).